The chain runs to 58 residues: Potassium channel toxin alpha-KTx 26.2 (58 aa).

The N-terminal stretch at 1 to 19 (MKTIFVVILVLFVLSAMLA) is a signal peptide. 3 cysteine pairs are disulfide-bonded: Cys31–Cys49, Cys35–Cys54, and Cys39–Cys56.

This sequence belongs to the short scorpion toxin superfamily. Potassium channel inhibitor family. Alpha-KTx 26 subfamily. Expressed by the venom gland.

It localises to the secreted. Functionally, inhibits voltage-gated potassium channels. In Lychas mucronatus (Chinese swimming scorpion), this protein is Potassium channel toxin alpha-KTx 26.2.